The sequence spans 174 residues: Cytochrome c-type biogenesis protein CcmE (174 aa).

Topologically, residues 1-8 (MNPRRKSR) are cytoplasmic. The helical; Signal-anchor for type II membrane protein transmembrane segment at 9 to 29 (LSVVLFIFLGISVASALVLYA) threads the bilayer. The Periplasmic segment spans residues 30–174 (LRQNIDLFYT…QEKQFKEGNQ (145 aa)). The heme site is built by His131 and Tyr135. The tract at residues 149–174 (KPMGISDLKNESDRDRQEKQFKEGNQ) is disordered. A compositionally biased stretch (basic and acidic residues) spans 156–174 (LKNESDRDRQEKQFKEGNQ).

This sequence belongs to the CcmE/CycJ family.

It localises to the cell inner membrane. Its function is as follows. Heme chaperone required for the biogenesis of c-type cytochromes. Transiently binds heme delivered by CcmC and transfers the heme to apo-cytochromes in a process facilitated by CcmF and CcmH. This is Cytochrome c-type biogenesis protein CcmE from Histophilus somni (strain 129Pt) (Haemophilus somnus).